The sequence spans 144 residues: Large ribosomal subunit protein uL15 (144 aa).

The interval 1-44 is disordered; that stretch reads MNLNELQPAAGSRKLRNRVGRGTSSGNGKTSGRGQKGQKARGKV. Positions 23 to 35 are enriched in gly residues; it reads TSSGNGKTSGRGQ.

This sequence belongs to the universal ribosomal protein uL15 family. As to quaternary structure, part of the 50S ribosomal subunit.

Binds to the 23S rRNA. This Leuconostoc citreum (strain KM20) protein is Large ribosomal subunit protein uL15.